A 389-amino-acid polypeptide reads, in one-letter code: Chalcone synthase 1 (389 aa).

C164 is an active-site residue.

This sequence belongs to the thiolase-like superfamily. Chalcone/stilbene synthases family.

The catalysed reaction is (E)-4-coumaroyl-CoA + 3 malonyl-CoA + 3 H(+) = 2',4,4',6'-tetrahydroxychalcone + 3 CO2 + 4 CoA. It participates in secondary metabolite biosynthesis; flavonoid biosynthesis. The primary product of this enzyme is 4,2',4',6'-tetrahydroxychalcone (also termed naringenin-chalcone or chalcone) which can under specific conditions spontaneously isomerize into naringenin. This chain is Chalcone synthase 1 (CHS1), found in Pisum sativum (Garden pea).